The chain runs to 298 residues: Cyclin-dependent kinase 2 (298 aa).

The Protein kinase domain maps to 4-286 (FQKVEKIGEG…AKNALVHRFF (283 aa)). Residues 10–18 (IGEGTYGVV), lysine 33, 81–83 (EFL), and aspartate 86 contribute to the ATP site. At threonine 14 the chain carries Phosphothreonine. Tyrosine 15 carries the post-translational modification Phosphotyrosine. The active-site Proton acceptor is aspartate 127. ATP is bound by residues 129–132 (KPQN) and aspartate 145. At threonine 160 the chain carries Phosphothreonine; by CAK.

Belongs to the protein kinase superfamily. CMGC Ser/Thr protein kinase family. CDC2/CDKX subfamily.

It catalyses the reaction L-seryl-[protein] + ATP = O-phospho-L-seryl-[protein] + ADP + H(+). The catalysed reaction is L-threonyl-[protein] + ATP = O-phospho-L-threonyl-[protein] + ADP + H(+). Phosphorylation at Thr-14 or Tyr-15 inactivates the enzyme, while phosphorylation at Thr-160 activates it. Functionally, serine/threonine-protein kinase involved in the control of the cell cycle; essential for meiosis, but dispensable for mitosis. Triggers duplication of centrosomes and DNA. Acts at the G1-S transition to promote the E2F transcriptional program and the initiation of DNA synthesis, and modulates G2 progression; controls the timing of entry into mitosis/meiosis by controlling the subsequent activation of cyclin B/CDK1 by phosphorylation, and coordinates the activation of cyclin B/CDK1 at the centrosome and in the nucleus. Crucial role in orchestrating a fine balance between cellular proliferation, cell death, and DNA repair in embryonic stem cells (ESCs). Activity of CDK2 is maximal during S phase and G2; activated by interaction with cyclin E during the early stages of DNA synthesis to permit G1-S transition, and subsequently activated by cyclin A2 (cyclin A1 in germ cells) during the late stages of DNA replication to drive the transition from S phase to mitosis, the G2 phase. The polypeptide is Cyclin-dependent kinase 2 (cdk2) (Carassius auratus (Goldfish)).